The primary structure comprises 366 residues: sn-glycerol-3-phosphate import ATP-binding protein UgpC (366 aa).

The region spanning 4–235 (LSLRNVQKTY…PASTFVAGFI (232 aa)) is the ABC transporter domain. 37–44 (GPSGCGKS) serves as a coordination point for ATP.

This sequence belongs to the ABC transporter superfamily. sn-glycerol-3-phosphate importer (TC 3.A.1.1.3) family. In terms of assembly, the complex is composed of two ATP-binding proteins (UgpC), two transmembrane proteins (UgpA and UgpE) and a solute-binding protein (UgpB).

It localises to the cell inner membrane. It carries out the reaction sn-glycerol 3-phosphate(out) + ATP + H2O = sn-glycerol 3-phosphate(in) + ADP + phosphate + H(+). Functionally, part of the ABC transporter complex UgpBAEC involved in sn-glycerol-3-phosphate (G3P) import. Responsible for energy coupling to the transport system. The sequence is that of sn-glycerol-3-phosphate import ATP-binding protein UgpC from Cupriavidus necator (strain ATCC 17699 / DSM 428 / KCTC 22496 / NCIMB 10442 / H16 / Stanier 337) (Ralstonia eutropha).